We begin with the raw amino-acid sequence, 296 residues long: Phosphatidylglycerol--prolipoprotein diacylglyceryl transferase (296 aa).

3 helical membrane-spanning segments follow: residues 17 to 37, 59 to 79, and 97 to 117; these read LAVR…IVVG, MMFY…VLFY, and GGMS…LFAW. Arg142 contacts a 1,2-diacyl-sn-glycero-3-phospho-(1'-sn-glycerol). Helical transmembrane passes span 230-250 and 257-277; these read MGAV…TVEF and FLGL…PMIL.

The protein belongs to the Lgt family.

It localises to the cell inner membrane. It catalyses the reaction L-cysteinyl-[prolipoprotein] + a 1,2-diacyl-sn-glycero-3-phospho-(1'-sn-glycerol) = an S-1,2-diacyl-sn-glyceryl-L-cysteinyl-[prolipoprotein] + sn-glycerol 1-phosphate + H(+). It participates in protein modification; lipoprotein biosynthesis (diacylglyceryl transfer). Its function is as follows. Catalyzes the transfer of the diacylglyceryl group from phosphatidylglycerol to the sulfhydryl group of the N-terminal cysteine of a prolipoprotein, the first step in the formation of mature lipoproteins. This Burkholderia lata (strain ATCC 17760 / DSM 23089 / LMG 22485 / NCIMB 9086 / R18194 / 383) protein is Phosphatidylglycerol--prolipoprotein diacylglyceryl transferase.